Here is a 691-residue protein sequence, read N- to C-terminus: T-box transcription factor TBX2-B (691 aa).

A DNA-binding region (T-box) is located at residues 104 to 277; it reads LWDQFHKIGT…HNPFAKGFRD (174 aa). Disordered regions lie at residues 301-440 and 612-691; these read CKAD…SLSK and NLLT…ESPK. The span at 325 to 335 shows a compositional bias: low complexity; the sequence is HSPLSAAPSPL. 3 stretches are compositionally biased toward basic and acidic residues: residues 340 to 361, 378 to 402, and 415 to 433; these read TNRE…EVRS, RLED…RKDG, and SLEK…KSDP. Positions 624 to 639 are enriched in low complexity; the sequence is PGSESSKPGSSRESSP. A coiled-coil region spans residues 659–684; that stretch reads SMKDSINELQRIQRLVSGLERQREVS. The segment covering 678–691 has biased composition (basic and acidic residues); it reads ERQREVSPGRESPK.

In terms of assembly, binds DNA as a monomer.

It is found in the nucleus. Transcription factor which acts as a transcriptional repressor. May also function as a transcriptional activator. Binds to the palindromic T site 5'-TTCACACCTAGGTGTGAA-3' DNA sequence, or a half-site, which are present in the regulatory region of several genes. In Xenopus laevis (African clawed frog), this protein is T-box transcription factor TBX2-B (tbx2-b).